An 83-amino-acid polypeptide reads, in one-letter code: Cytochrome b559 subunit alpha (83 aa).

Residues valine 21 to tryptophan 35 traverse the membrane as a helical segment. A heme-binding site is contributed by histidine 23.

This sequence belongs to the PsbE/PsbF family. As to quaternary structure, heterodimer of an alpha subunit and a beta subunit. PSII is composed of 1 copy each of membrane proteins PsbA, PsbB, PsbC, PsbD, PsbE, PsbF, PsbH, PsbI, PsbJ, PsbK, PsbL, PsbM, PsbT, PsbX, PsbY, PsbZ, Psb30/Ycf12, at least 3 peripheral proteins of the oxygen-evolving complex and a large number of cofactors. It forms dimeric complexes. Requires heme b as cofactor.

The protein resides in the plastid. The protein localises to the chloroplast thylakoid membrane. In terms of biological role, this b-type cytochrome is tightly associated with the reaction center of photosystem II (PSII). PSII is a light-driven water:plastoquinone oxidoreductase that uses light energy to abstract electrons from H(2)O, generating O(2) and a proton gradient subsequently used for ATP formation. It consists of a core antenna complex that captures photons, and an electron transfer chain that converts photonic excitation into a charge separation. This Acorus calamus (Sweet flag) protein is Cytochrome b559 subunit alpha.